The primary structure comprises 339 residues: D-alanine--D-alanine ligase (339 aa).

The ATP-grasp domain maps to 115–327; the sequence is KHIFRSLGID…FNELVKIIIE (213 aa). An ATP-binding site is contributed by 142–211; that stretch reads KIDYPYVLKP…EEYIPGIELH (70 aa). Residues Asp-279, Glu-293, and Asn-295 each contribute to the Mg(2+) site.

Belongs to the D-alanine--D-alanine ligase family. Mg(2+) is required as a cofactor. It depends on Mn(2+) as a cofactor.

It localises to the cytoplasm. The catalysed reaction is 2 D-alanine + ATP = D-alanyl-D-alanine + ADP + phosphate + H(+). It participates in cell wall biogenesis; peptidoglycan biosynthesis. In terms of biological role, cell wall formation. The protein is D-alanine--D-alanine ligase of Wolbachia sp. subsp. Brugia malayi (strain TRS).